The chain runs to 253 residues: Thiamine import ATP-binding protein ThiQ (253 aa).

The ABC transporter domain occupies 8–236 (VRLDKVSFSY…AGPEAFRRYI (229 aa)). An ATP-binding site is contributed by 38–45 (GPSGSGKS).

It belongs to the ABC transporter superfamily. Thiamine importer (TC 3.A.1.19.1) family. As to quaternary structure, the complex is composed of two ATP-binding proteins (ThiQ), two transmembrane proteins (ThiP) and a solute-binding protein (ThiB).

Its subcellular location is the cell inner membrane. It carries out the reaction thiamine(out) + ATP + H2O = thiamine(in) + ADP + phosphate + H(+). Its function is as follows. Part of the ABC transporter complex ThiBPQ involved in thiamine import. Responsible for energy coupling to the transport system. This Mesorhizobium japonicum (strain LMG 29417 / CECT 9101 / MAFF 303099) (Mesorhizobium loti (strain MAFF 303099)) protein is Thiamine import ATP-binding protein ThiQ.